Here is a 581-residue protein sequence, read N- to C-terminus: Proteasome-associated ATPase (581 aa).

Residues 1 to 28 (MTSSDLTQRKGLTMSDSTPDTPRSTPED) are disordered. A compositionally biased stretch (polar residues) spans 14–24 (MSDSTPDTPRS). Positions 27–66 (EDAARRLAVLSAQNERLAQVLGEARGKIVELQQQIEEFAK) form a coiled coil. 248 to 253 (GCGKTL) contacts ATP. The segment at 561 to 581 (GSGRSAAGRTIETATSTGQYL) is disordered. The span at 572–581 (ETATSTGQYL) shows a compositional bias: polar residues. The interval 580-581 (YL) is docks into pockets in the proteasome alpha-ring.

Belongs to the AAA ATPase family. Homohexamer. Assembles into a hexameric ring structure that caps the 20S proteasome core. Strongly interacts with the prokaryotic ubiquitin-like protein Pup through a hydrophobic interface; the interacting region of ARC lies in its N-terminal coiled-coil domain. There is one Pup binding site per ARC hexamer ring. Upon ATP-binding, the C-terminus of ARC interacts with the alpha-rings of the proteasome core, possibly by binding to the intersubunit pockets.

The protein operates within protein degradation; proteasomal Pup-dependent pathway. Its function is as follows. ATPase which is responsible for recognizing, binding, unfolding and translocation of pupylated proteins into the bacterial 20S proteasome core particle. May be essential for opening the gate of the 20S proteasome via an interaction with its C-terminus, thereby allowing substrate entry and access to the site of proteolysis. Thus, the C-termini of the proteasomal ATPase may function like a 'key in a lock' to induce gate opening and therefore regulate proteolysis. The polypeptide is Proteasome-associated ATPase (Sanguibacter keddieii (strain ATCC 51767 / DSM 10542 / NCFB 3025 / ST-74)).